The primary structure comprises 407 residues: 1-deoxy-D-xylulose 5-phosphate reductoisomerase (407 aa).

NADPH contacts are provided by T25, G26, S27, I28, N53, and N136. K137 is a binding site for 1-deoxy-D-xylulose 5-phosphate. E138 serves as a coordination point for NADPH. D162 contributes to the Mn(2+) binding site. 1-deoxy-D-xylulose 5-phosphate-binding residues include S163, E164, S188, and H211. A Mn(2+)-binding site is contributed by E164. G217 provides a ligand contact to NADPH. 4 residues coordinate 1-deoxy-D-xylulose 5-phosphate: S224, N229, K230, and E233. Residue E233 coordinates Mn(2+).

Belongs to the DXR family. Mg(2+) is required as a cofactor. The cofactor is Mn(2+).

The enzyme catalyses 2-C-methyl-D-erythritol 4-phosphate + NADP(+) = 1-deoxy-D-xylulose 5-phosphate + NADPH + H(+). The protein operates within isoprenoid biosynthesis; isopentenyl diphosphate biosynthesis via DXP pathway; isopentenyl diphosphate from 1-deoxy-D-xylulose 5-phosphate: step 1/6. Its function is as follows. Catalyzes the NADPH-dependent rearrangement and reduction of 1-deoxy-D-xylulose-5-phosphate (DXP) to 2-C-methyl-D-erythritol 4-phosphate (MEP). The sequence is that of 1-deoxy-D-xylulose 5-phosphate reductoisomerase from Rhodopseudomonas palustris (strain TIE-1).